The sequence spans 195 residues: Urease accessory protein UreG (195 aa).

9–16 is a binding site for GTP; sequence GPVGSGKT.

The protein belongs to the SIMIBI class G3E GTPase family. UreG subfamily. Homodimer. UreD, UreF and UreG form a complex that acts as a GTP-hydrolysis-dependent molecular chaperone, activating the urease apoprotein by helping to assemble the nickel containing metallocenter of UreC. The UreE protein probably delivers the nickel.

The protein localises to the cytoplasm. Its function is as follows. Facilitates the functional incorporation of the urease nickel metallocenter. This process requires GTP hydrolysis, probably effectuated by UreG. The sequence is that of Urease accessory protein UreG from Aliarcobacter butzleri (strain RM4018) (Arcobacter butzleri).